Consider the following 86-residue polypeptide: MKTLLLTLVVVTIVCLDLGYTLTCLNCPEVFCKKFQTCRNGEKICFKKFDERKLFGKRYRRGCAATCPEAKPREIVQCCSTDRCNR.

An N-terminal signal peptide occupies residues 1 to 21 (MKTLLLTLVVVTIVCLDLGYT). Intrachain disulfides connect cysteine 24–cysteine 45, cysteine 27–cysteine 32, cysteine 38–cysteine 63, cysteine 67–cysteine 78, and cysteine 79–cysteine 84.

Belongs to the three-finger toxin family. Ancestral subfamily. Orphan group II sub-subfamily. Expressed by the venom gland.

It is found in the secreted. In terms of biological role, binds with low affinity to muscular (alpha-1-beta-1-delta-epsilon/CHRNA1-CHRNB1-CHRND-CHRNE) and very low affinity to neuronal (alpha-7/CHRNA7) nicotinic acetylcholine receptor (nAChR). The chain is Weak neurotoxin 10 (WNTX10) from Naja sputatrix (Malayan spitting cobra).